The sequence spans 434 residues: Tol-Pal system protein TolB (434 aa).

The signal sequence occupies residues 1–21 (MTVRRALALAALALAVSPALA). Residues 411 to 434 (GDRQTPVTSGKTDLAAPAWGPLAP) are disordered.

Belongs to the TolB family. In terms of assembly, the Tol-Pal system is composed of five core proteins: the inner membrane proteins TolA, TolQ and TolR, the periplasmic protein TolB and the outer membrane protein Pal. They form a network linking the inner and outer membranes and the peptidoglycan layer.

It localises to the periplasm. Its function is as follows. Part of the Tol-Pal system, which plays a role in outer membrane invagination during cell division and is important for maintaining outer membrane integrity. This Anaeromyxobacter dehalogenans (strain 2CP-1 / ATCC BAA-258) protein is Tol-Pal system protein TolB.